The chain runs to 380 residues: Interleukin-13 receptor subunit alpha-2 (380 aa).

The signal sequence occupies residues 1-26 (MAFVCLAIGCLYTFLISTTFGCTSSS). Topologically, residues 27–343 (DTEIKVNPPQ…EDLSKKTLLR (317 aa)) are extracellular. 3 consecutive Fibronectin type-III domains span residues 34 to 134 (PPQD…SPQG), 139 to 235 (KVQD…LQNI), and 240 to 333 (PPVY…CWEG). Cysteines 65 and 113 form a disulfide. N-linked (GlcNAc...) asparagine glycosylation is present at asparagine 115. 2 disulfides stabilise this stretch: cysteine 145–cysteine 155 and cysteine 184–cysteine 197. Asparagine 215, asparagine 290, and asparagine 299 each carry an N-linked (GlcNAc...) asparagine glycan. A disulfide bond links cysteine 269 and cysteine 316. Residues 322–326 (WSEWS) carry the WSXWS motif motif. Residues 344–363 (FWLPFGFILILVIFVTGLLL) form a helical membrane-spanning segment. At 364–380 (RKPNTYPKMIPEFFCDT) the chain is on the cytoplasmic side.

Belongs to the type I cytokine receptor family. Type 5 subfamily. Interacts with IL4RA. Interacts with high affinity to interleukin-13 (IL13), but not to interleukin-4 (IL4). In terms of processing, cleaved by MMP8 leading to a soluble form that is also able to interact with IL13.

It is found in the cell membrane. In terms of biological role, cell surface receptor that plays a role in the regulation of IL-13-mediated responses. Functions as a decoy receptor that inhibits IL-13- and IL-4-mediated signal transduction via the JAK-STAT pathway and thereby modulates immune responses and inflammation. Serves as a functional signaling receptor for IL-13 in an alternative pathway involving AP-1 ultimately leading to the production of TGFB1. The protein is Interleukin-13 receptor subunit alpha-2 (IL13RA2) of Homo sapiens (Human).